We begin with the raw amino-acid sequence, 934 residues long: Replication factor C subunit 1 (934 aa).

The interval 1-190 (MSNSDIRSFF…RSSKSKGLPR (190 aa)) is disordered. A Phosphoserine modification is found at Ser-27. The segment covering 29-39 (KPKRSLKKKRI) has biased composition (basic residues). The segment covering 89–104 (GVSTTPDEYFEQQSTR) has biased composition (polar residues). Over residues 118-128 (TTSKDVVHPVK) the composition is skewed to basic and acidic residues. The segment covering 165 to 186 (TSKSKSHTTTATTHTSRSSKSK) has biased composition (low complexity). A BRCT domain is found at 236-326 (GNSDCLSGIS…PASGGTGAAA (91 aa)). Residues Thr-362, Cys-374, 416–423 (GPPGIGKT), and Asn-519 each bind ATP. Acidic residues predominate over residues 876-895 (AEDEMLEEASDSEAANEEDI). The segment at 876-934 (AEDEMLEEASDSEAANEEDIDLSKDKFISVPKKPKKRTKAKAEASSSSSTSRRSRKKTA) is disordered.

The protein belongs to the activator 1 large subunit family. In terms of assembly, heteropentamer of subunits rfc1, rfc2, rfc3, rfc4 and rfc5 that forms a complex (RFC) with PCNA in the presence of ATP. Interacts with cdc24.

It is found in the nucleus. Its subcellular location is the nucleolus. Its function is as follows. The elongation of primed DNA templates by DNA polymerase delta and epsilon requires the action of the accessory proteins PCNA and activator 1. Subunit 1 is essential for cell cycle progression. It may associate with components of the DNA replication machinery and serve to enhance the efficiency of DNA replication. The polypeptide is Replication factor C subunit 1 (rfc1) (Schizosaccharomyces pombe (strain 972 / ATCC 24843) (Fission yeast)).